The sequence spans 413 residues: Isobutyryl-CoA dehydrogenase, mitochondrial (413 aa).

The transit peptide at 1-20 (MAMLRSGYRRFGCLRAALKS) directs the protein to the mitochondrion. At Lys48 the chain carries N6-acetyllysine; alternate. Lys48 is subject to N6-succinyllysine; alternate. FAD is bound by residues 156–165 (YCLTEPGSGS) and 189–191 (FIS). Ser165 contributes to the substrate binding site. Lys211 bears the N6-succinyllysine mark. The residue at position 229 (Lys229) is an N6-acetyllysine. Residue Lys269 is modified to N6-succinyllysine. 272–275 (NGGR) is a substrate binding site. Residues Arg300, 310–311 (SQ), and 369–373 (QMHGG) each bind FAD. The Proton acceptor role is filled by Glu396. Residue 398-400 (SNE) participates in FAD binding. A substrate-binding site is contributed by Arg408.

Belongs to the acyl-CoA dehydrogenase family. Homotetramer, formed by a dimer of dimers. The cofactor is FAD.

It localises to the mitochondrion. It catalyses the reaction 2-methylpropanoyl-CoA + oxidized [electron-transfer flavoprotein] + H(+) = 2-methylpropenoyl-CoA + reduced [electron-transfer flavoprotein]. The catalysed reaction is (2S)-2-methylbutanoyl-CoA + oxidized [electron-transfer flavoprotein] + H(+) = (2E)-2-methylbut-2-enoyl-CoA + reduced [electron-transfer flavoprotein]. The enzyme catalyses propanoyl-CoA + oxidized [electron-transfer flavoprotein] + H(+) = acryloyl-CoA + reduced [electron-transfer flavoprotein]. It functions in the pathway amino-acid degradation; L-valine degradation. Isobutyryl-CoA dehydrogenase which catalyzes the conversion of 2-methylpropanoyl-CoA to (2E)-2-methylpropenoyl-CoA in the valine catabolic pathway. To a lesser extent, also able to catalyze the oxidation of (2S)-2-methylbutanoyl-CoA. This Mus musculus (Mouse) protein is Isobutyryl-CoA dehydrogenase, mitochondrial.